The primary structure comprises 252 residues: Serine/threonine phosphatase stp (252 aa).

Positions 1 to 18 (MHAEFRTDRGRIRHHNED) are enriched in basic and acidic residues. The interval 1–23 (MHAEFRTDRGRIRHHNEDNGGVF) is disordered. The region spanning 2–242 (HAEFRTDRGR…DNITVLLVER (241 aa)) is the PPM-type phosphatase domain. Residues Asp36, Gly37, Asp194, and Asp233 each contribute to the Mn(2+) site.

This sequence belongs to the PP2C family. Requires Mn(2+) as cofactor.

Its subcellular location is the cytoplasm. The protein resides in the membrane. It carries out the reaction O-phospho-L-seryl-[protein] + H2O = L-seryl-[protein] + phosphate. The catalysed reaction is O-phospho-L-threonyl-[protein] + H2O = L-threonyl-[protein] + phosphate. Its function is as follows. Protein phosphatase that dephosphorylates EF-Tu. This Listeria monocytogenes serotype 4b (strain F2365) protein is Serine/threonine phosphatase stp (stp).